The primary structure comprises 702 residues: Epsin-1 (702 aa).

The region spanning 10–142 (NFSKGYTDTQ…EDEHALKEAR (133 aa)) is the ENTH domain. 2 stretches are compositionally biased toward basic and acidic residues: residues 136 to 160 (HALK…SSRF) and 183 to 192 (SRYDDDDRDH). The segment at 136–285 (HALKEARGDS…HQREREQQEQ (150 aa)) is disordered. Basic residues predominate over residues 193–214 (RSRRRSRSRRPGRSRSRRRSRR). Phosphoserine occurs at positions 212, 216, 218, and 223. UIM domains follow at residues 226–245 (ENDP…AEED) and 254–273 (DSEA…DEAR). Residues 230-248 (ELQRVIEESKRQAEEDAKR) are compositionally biased toward basic and acidic residues. Serine 255 is subject to Phosphoserine. The segment covering 266–283 (SKEEDEARQRHQREREQQ) has biased composition (basic and acidic residues). Threonine 406 carries the phosphothreonine modification. Disordered stretches follow at residues 504-589 (NHTG…RTGD) and 683-702 (PMQG…LIDL). Polar residues predominate over residues 514–534 (TGLQRQTTGYTGNNNPYSRPL). Residues 535 to 549 (QSQSTGILQQQQQQS) show a composition bias toward low complexity. Residues 557 to 577 (KTGSNNPFAQFSNLPSQSTAP) show a composition bias toward polar residues. The segment covering 683–695 (PMQGMQQQSMQPQ) has biased composition (low complexity).

Belongs to the epsin family.

It is found in the cytoplasm. The protein resides in the membrane. Functionally, binds to membranes enriched in phosphatidylinositol 3,5-bisphosphate (PtdIns(3,5)P2) and phosphatidylinositol 4,5-bisphosphate (PtdIns(4,5)P2). Required for endocytosis and localization of actin. The sequence is that of Epsin-1 (ent1) from Schizosaccharomyces pombe (strain 972 / ATCC 24843) (Fission yeast).